We begin with the raw amino-acid sequence, 515 residues long: 2,3-bisphosphoglycerate-independent phosphoglycerate mutase (515 aa).

Mn(2+) contacts are provided by D14 and S64. S64 serves as the catalytic Phosphoserine intermediate. Substrate-binding positions include H125, R155–D156, R187, R193, R263–R266, and K337. D404, H408, D445, H446, and H464 together coordinate Mn(2+).

This sequence belongs to the BPG-independent phosphoglycerate mutase family. In terms of assembly, monomer. Requires Mn(2+) as cofactor.

It carries out the reaction (2R)-2-phosphoglycerate = (2R)-3-phosphoglycerate. Its pathway is carbohydrate degradation; glycolysis; pyruvate from D-glyceraldehyde 3-phosphate: step 3/5. Catalyzes the interconversion of 2-phosphoglycerate and 3-phosphoglycerate. The chain is 2,3-bisphosphoglycerate-independent phosphoglycerate mutase from Pseudomonas aeruginosa (strain UCBPP-PA14).